Consider the following 247-residue polypeptide: uncharacterized protein (247 aa).

It belongs to the AIM2 family.

It localises to the cytoplasm. Its subcellular location is the nucleus. This is an uncharacterized protein from Schizosaccharomyces pombe (strain 972 / ATCC 24843) (Fission yeast).